Reading from the N-terminus, the 391-residue chain is Phosphoglycerate kinase (391 aa).

Substrate-binding positions include 21 to 23 (DLN), arginine 36, 59 to 62 (HLGR), arginine 113, and arginine 146. Residues lysine 197, glutamate 319, and 345-348 (GGDT) each bind ATP.

The protein belongs to the phosphoglycerate kinase family. As to quaternary structure, monomer.

The protein resides in the cytoplasm. The catalysed reaction is (2R)-3-phosphoglycerate + ATP = (2R)-3-phospho-glyceroyl phosphate + ADP. The protein operates within carbohydrate degradation; glycolysis; pyruvate from D-glyceraldehyde 3-phosphate: step 2/5. The polypeptide is Phosphoglycerate kinase (Xanthomonas oryzae pv. oryzae (strain MAFF 311018)).